A 271-amino-acid chain; its full sequence is ATP synthase subunit a (271 aa).

Helical transmembrane passes span Thr-40–Phe-60, Leu-100–Leu-120, Asp-146–Ile-166, Leu-220–Pro-240, and Ala-242–Val-262.

Belongs to the ATPase A chain family. F-type ATPases have 2 components, CF(1) - the catalytic core - and CF(0) - the membrane proton channel. CF(1) has five subunits: alpha(3), beta(3), gamma(1), delta(1), epsilon(1). CF(0) has three main subunits: a(1), b(2) and c(9-12). The alpha and beta chains form an alternating ring which encloses part of the gamma chain. CF(1) is attached to CF(0) by a central stalk formed by the gamma and epsilon chains, while a peripheral stalk is formed by the delta and b chains.

Its subcellular location is the cell inner membrane. In terms of biological role, key component of the proton channel; it plays a direct role in the translocation of protons across the membrane. The polypeptide is ATP synthase subunit a (Shigella dysenteriae serotype 1 (strain Sd197)).